A 143-amino-acid polypeptide reads, in one-letter code: Ribosome-binding factor A (143 aa).

Positions 123-143 (DKSLQENYKQNDKETKAEKLR) are disordered.

Belongs to the RbfA family. As to quaternary structure, monomer. Binds 30S ribosomal subunits, but not 50S ribosomal subunits or 70S ribosomes.

Its subcellular location is the cytoplasm. One of several proteins that assist in the late maturation steps of the functional core of the 30S ribosomal subunit. Associates with free 30S ribosomal subunits (but not with 30S subunits that are part of 70S ribosomes or polysomes). Required for efficient processing of 16S rRNA. May interact with the 5'-terminal helix region of 16S rRNA. This is Ribosome-binding factor A from Francisella tularensis subsp. novicida (strain U112).